A 466-amino-acid polypeptide reads, in one-letter code: Vacuolar protein sorting-associated protein 30 (466 aa).

Positions 35-55 (SETNTDNSDNNKHNGENDRNI) are disordered. Basic and acidic residues predominate over residues 43-53 (DNNKHNGENDR). Residues 149–258 (DTLLEKLKEE…QMEHLSFIKD (110 aa)) are a coiled coil. Residues 279 to 463 (LNIYNETFRI…LAFSTSRINK (185 aa)) form a BARA region. Residues 439–464 (WTTACKFLLTNIKWLLAFSTSRINKA) are required for membrane-association, autophagic function during starvation and normal autophagosome morphology.

This sequence belongs to the beclin family. In terms of assembly, component of the autophagy-specific VPS34 PI3-kinase complex I; and of the VPS34 PI3-kinase complex II.

It is found in the endosome membrane. The protein localises to the vacuole membrane. It localises to the preautophagosomal structure membrane. Required for cytoplasm to vacuole transport (Cvt), autophagy, nucleophagy, and mitophagy, as a part of the autophagy-specific VPS34 PI3-kinase complex I. This complex is essential to recruit the ATG8-phosphatidylinositol conjugate and the ATG12-ATG5 conjugate to the pre-autophagosomal structure. Also involved in endosome-to-Golgi retrograde transport as part of the VPS34 PI3-kinase complex II. The polypeptide is Vacuolar protein sorting-associated protein 30 (Kluyveromyces marxianus (strain DMKU3-1042 / BCC 29191 / NBRC 104275) (Yeast)).